Here is a 126-residue protein sequence, read N- to C-terminus: Holo-[acyl-carrier-protein] synthase (126 aa).

Residues Asp9 and Glu58 each contribute to the Mg(2+) site.

This sequence belongs to the P-Pant transferase superfamily. AcpS family. Requires Mg(2+) as cofactor.

The protein localises to the cytoplasm. The catalysed reaction is apo-[ACP] + CoA = holo-[ACP] + adenosine 3',5'-bisphosphate + H(+). Its function is as follows. Transfers the 4'-phosphopantetheine moiety from coenzyme A to a Ser of acyl-carrier-protein. This chain is Holo-[acyl-carrier-protein] synthase, found in Escherichia coli O139:H28 (strain E24377A / ETEC).